Reading from the N-terminus, the 102-residue chain is NADH-quinone oxidoreductase subunit K (102 aa).

3 consecutive transmembrane segments (helical) span residues 5 to 25, 30 to 50, and 63 to 83; these read ALTG…FGVL, ILFQ…AFIA, and MFVL…ALFL.

Belongs to the complex I subunit 4L family. In terms of assembly, NDH-1 is composed of 14 different subunits. Subunits NuoA, H, J, K, L, M, N constitute the membrane sector of the complex.

Its subcellular location is the cell inner membrane. The enzyme catalyses a quinone + NADH + 5 H(+)(in) = a quinol + NAD(+) + 4 H(+)(out). Its function is as follows. NDH-1 shuttles electrons from NADH, via FMN and iron-sulfur (Fe-S) centers, to quinones in the respiratory chain. The immediate electron acceptor for the enzyme in this species is believed to be ubiquinone. Couples the redox reaction to proton translocation (for every two electrons transferred, four hydrogen ions are translocated across the cytoplasmic membrane), and thus conserves the redox energy in a proton gradient. This chain is NADH-quinone oxidoreductase subunit K, found in Rhodopseudomonas palustris (strain BisB18).